We begin with the raw amino-acid sequence, 1025 residues long: DNA ligase 4 (1025 aa).

A disordered region spans residues 1-36; sequence MMQPTPAPSSAPGSPQRTQAEPEMETPSYPQPPQNV. 10 residues coordinate ATP: Glu289, Lys291, Leu292, Arg296, Glu349, Phe387, Glu447, Lys452, Lys469, and Lys471. Catalysis depends on Lys291, which acts as the N6-AMP-lysine intermediate. Residue Glu349 participates in Mg(2+) binding. Position 447 (Glu447) interacts with Mg(2+). The region spanning 667 to 763 is the BRCT 1 domain; sequence VKTDIFNGMK…EPAPFKKKYF (97 aa). A disordered region spans residues 773–904; that stretch reads ADEYNEDDGE…TTPDVDGDVK (132 aa). Composition is skewed to acidic residues over residues 775–785 and 806–816; these read EYNEDDGEEEG and SETEDEDEEQA. A compositionally biased stretch (basic and acidic residues) spans 817–838; that stretch reads PEIKEEQDGELHEWLKVDDRKS. Residues 845–870 are compositionally biased toward acidic residues; it reads DEEDSVTEDDSDNADVADEEEPDLDD. Residues 891-904 show a composition bias toward basic and acidic residues; it reads RHRETTPDVDGDVK. A BRCT 2 domain is found at 915–1025; sequence DPDVIFKHLC…TLLDEEGESF (111 aa).

Belongs to the ATP-dependent DNA ligase family. It depends on Mg(2+) as a cofactor.

Its subcellular location is the nucleus. The catalysed reaction is ATP + (deoxyribonucleotide)n-3'-hydroxyl + 5'-phospho-(deoxyribonucleotide)m = (deoxyribonucleotide)n+m + AMP + diphosphate.. DNA ligase involved in DNA non-homologous end joining (NHEJ); required for double-strand break (DSB) repair. This Coprinopsis cinerea (strain Okayama-7 / 130 / ATCC MYA-4618 / FGSC 9003) (Inky cap fungus) protein is DNA ligase 4 (LIG4).